The primary structure comprises 1012 residues: DNA polymerase gamma (1012 aa).

The protein belongs to the DNA polymerase type-A family. The cofactor is Mg(2+).

The protein resides in the mitochondrion. It catalyses the reaction DNA(n) + a 2'-deoxyribonucleoside 5'-triphosphate = DNA(n+1) + diphosphate. Involved in the replication of mitochondrial DNA. This is DNA polymerase gamma (MIP1) from Komagataella pastoris (Yeast).